The sequence spans 320 residues: Tryptophan--tRNA ligase (320 aa).

ATP-binding positions include 8-10 (QPT) and 16-17 (GN). A 'HIGH' region motif is present at residues 9–17 (PTGRPHWGN). Residue D131 participates in L-tryptophan binding. Residues 143-145 (GVD), V182, and 189-193 (KMSKS) contribute to the ATP site. Residues 189–193 (KMSKS) carry the 'KMSKS' region motif.

Belongs to the class-I aminoacyl-tRNA synthetase family. In terms of assembly, homodimer.

It is found in the cytoplasm. It carries out the reaction tRNA(Trp) + L-tryptophan + ATP = L-tryptophyl-tRNA(Trp) + AMP + diphosphate + H(+). Functionally, catalyzes the attachment of tryptophan to tRNA(Trp). The polypeptide is Tryptophan--tRNA ligase (Rhodopirellula baltica (strain DSM 10527 / NCIMB 13988 / SH1)).